Here is a 24-residue protein sequence, read N- to C-terminus: Coenzyme PQQ synthesis protein A (24 aa).

Positions Glu16–Tyr20 form a cross-link, pyrroloquinoline quinone (Glu-Tyr).

Belongs to the PqqA family.

The protein operates within cofactor biosynthesis; pyrroloquinoline quinone biosynthesis. Required for coenzyme pyrroloquinoline quinone (PQQ) biosynthesis. PQQ is probably formed by cross-linking a specific glutamate to a specific tyrosine residue and excising these residues from the peptide. The sequence is that of Coenzyme PQQ synthesis protein A from Methylococcus capsulatus (strain ATCC 33009 / NCIMB 11132 / Bath).